Consider the following 305-residue polypeptide: UDP-3-O-acyl-N-acetylglucosamine deacetylase (305 aa).

The Zn(2+) site is built by H79, H238, and D242. H265 (proton donor) is an active-site residue.

The protein belongs to the LpxC family. Requires Zn(2+) as cofactor.

It catalyses the reaction a UDP-3-O-[(3R)-3-hydroxyacyl]-N-acetyl-alpha-D-glucosamine + H2O = a UDP-3-O-[(3R)-3-hydroxyacyl]-alpha-D-glucosamine + acetate. It functions in the pathway glycolipid biosynthesis; lipid IV(A) biosynthesis; lipid IV(A) from (3R)-3-hydroxytetradecanoyl-[acyl-carrier-protein] and UDP-N-acetyl-alpha-D-glucosamine: step 2/6. Functionally, catalyzes the hydrolysis of UDP-3-O-myristoyl-N-acetylglucosamine to form UDP-3-O-myristoylglucosamine and acetate, the committed step in lipid A biosynthesis. This is UDP-3-O-acyl-N-acetylglucosamine deacetylase from Erwinia tasmaniensis (strain DSM 17950 / CFBP 7177 / CIP 109463 / NCPPB 4357 / Et1/99).